A 281-amino-acid chain; its full sequence is UPF0294 protein VP2298 (281 aa).

Belongs to the UPF0294 family.

The protein localises to the cytoplasm. The sequence is that of UPF0294 protein VP2298 from Vibrio parahaemolyticus serotype O3:K6 (strain RIMD 2210633).